Consider the following 469-residue polypeptide: Phenylalanine--tRNA ligase, mitochondrial (469 aa).

A mitochondrion-targeting transit peptide spans 1 to 17; the sequence is MFLNRMMKTRTGLYRLY. Substrate contacts are provided by residues 126 to 129, Arg-155, 162 to 164, 169 to 171, Glu-302, and Phe-329; these read SAHE, THY, and QME. One can recognise an FDX-ACB domain in the interval 372 to 469; it reads SKHPGSFRDV…LVKEYSVELR (98 aa).

It belongs to the class-II aminoacyl-tRNA synthetase family. As to quaternary structure, monomer.

The protein localises to the mitochondrion matrix. The catalysed reaction is tRNA(Phe) + L-phenylalanine + ATP = L-phenylalanyl-tRNA(Phe) + AMP + diphosphate + H(+). In terms of biological role, is responsible for the charging of tRNA(Phe) with phenylalanine in mitochondrial translation. This Saccharomyces cerevisiae (strain ATCC 204508 / S288c) (Baker's yeast) protein is Phenylalanine--tRNA ligase, mitochondrial (MSF1).